The following is a 382-amino-acid chain: tRNA(Ile)-lysidine synthase (382 aa).

50-55 (SGGRDS) contributes to the ATP binding site.

Belongs to the tRNA(Ile)-lysidine synthase family.

The protein localises to the cytoplasm. The enzyme catalyses cytidine(34) in tRNA(Ile2) + L-lysine + ATP = lysidine(34) in tRNA(Ile2) + AMP + diphosphate + H(+). Ligates lysine onto the cytidine present at position 34 of the AUA codon-specific tRNA(Ile) that contains the anticodon CAU, in an ATP-dependent manner. Cytidine is converted to lysidine, thus changing the amino acid specificity of the tRNA from methionine to isoleucine. The polypeptide is tRNA(Ile)-lysidine synthase (Bifidobacterium animalis subsp. lactis (strain AD011)).